The chain runs to 202 residues: Lipid A acyltransferase PagP (202 aa).

Positions 1–25 (MNYKDIINACILSGVFLLHSPSALA) are cleaved as a signal peptide. Active-site residues include His-74, Asp-117, and Ser-118.

It belongs to the lipid A palmitoyltransferase family. In terms of assembly, homodimer.

It localises to the cell outer membrane. The enzyme catalyses a lipid A + a 1,2-diacyl-sn-glycero-3-phosphocholine = a hepta-acyl lipid A + a 2-acyl-sn-glycero-3-phosphocholine. The catalysed reaction is a lipid IVA + a 1,2-diacyl-sn-glycero-3-phosphocholine = a lipid IVB + a 2-acyl-sn-glycero-3-phosphocholine. It carries out the reaction a lipid IIA + a 1,2-diacyl-sn-glycero-3-phosphocholine = a lipid IIB + a 2-acyl-sn-glycero-3-phosphocholine. Its function is as follows. Transfers a fatty acid residue from the sn-1 position of a phospholipid to the N-linked hydroxyfatty acid chain on the proximal unit of lipid A or its precursors. The protein is Lipid A acyltransferase PagP of Yersinia pseudotuberculosis serotype IB (strain PB1/+).